The chain runs to 96 residues: 5-hydroxytryptamine receptor 2B (96 aa).

Residues 1–8 (CNQSTLQM) lie on the Extracellular side of the membrane. N-linked (GlcNAc...) asparagine glycosylation occurs at Asn2. Residues 9 to 30 (LLEIFVWIGYVSSGVNPLVYTL) form a helical membrane-spanning segment. Residues 24–28 (NPLVY) carry the NPxxY motif; important for ligand-induced conformation changes and signaling motif. Residues 31–96 (FNKTFRDAFG…STMYQSPVRL (66 aa)) are Cytoplasmic-facing. Cys45 carries S-palmitoyl cysteine lipidation.

Belongs to the G-protein coupled receptor 1 family. Interacts (via C-terminus) with MPDZ.

Its subcellular location is the cell membrane. It is found in the synapse. It localises to the synaptosome. In terms of biological role, G-protein coupled receptor for 5-hydroxytryptamine (serotonin). Also functions as a receptor for various ergot alkaloid derivatives and psychoactive substances. Ligand binding causes a conformation change that triggers signaling via guanine nucleotide-binding proteins (G proteins) and modulates the activity of downstream effectors. HTR2B is coupled to G(q)/G(11) G alpha proteins and activates phospholipase C-beta, releasing diacylglycerol (DAG) and inositol 1,4,5-trisphosphate (IP3) second messengers that modulate the activity of phosphatidylinositol 3-kinase and promote the release of Ca(2+) ions from intracellular stores, respectively. Beta-arrestin family members inhibit signaling via G proteins and mediate activation of alternative signaling pathways. Plays a role in the regulation of dopamine and 5-hydroxytryptamine release, 5-hydroxytryptamine uptake and in the regulation of extracellular dopamine and 5-hydroxytryptamine levels, and thereby affects neural activity. May play a role in the perception of pain. Plays a role in the regulation of behavior, including impulsive behavior. Required for normal proliferation of embryonic cardiac myocytes and normal heart development. Protects cardiomyocytes against apoptosis. Plays a role in the adaptation of pulmonary arteries to chronic hypoxia. Plays a role in vasoconstriction. Required for normal osteoblast function and proliferation, and for maintaining normal bone density. Required for normal proliferation of the interstitial cells of Cajal in the intestine. This chain is 5-hydroxytryptamine receptor 2B (HTR2B), found in Cavia porcellus (Guinea pig).